Here is a 146-residue protein sequence, read N- to C-terminus: Putative pre-16S rRNA nuclease (146 aa).

This sequence belongs to the YqgF nuclease family.

It is found in the cytoplasm. Could be a nuclease involved in processing of the 5'-end of pre-16S rRNA. This Dechloromonas aromatica (strain RCB) protein is Putative pre-16S rRNA nuclease.